Here is an 840-residue protein sequence, read N- to C-terminus: MSGSEEEHLVSLTFRKNEEDMDEDEGKVKQKEKPKEKQMEFVNQNFVESTEDESEVSTPTAVGLPIGTSTPDGDETPTQPDPNGKYTMAQTKDADLSRPSGLPSNGNPGSSTTVPPASKSGPVAPPRPSGTPVAPQRNRRRKVTELKCSEVRWFFQEPKGTLWNPFNGRDSIMLEIKYRKEKGIELDEAMQEIYDESLTHYKMEMKDEPEIENGNIGMEQEKPMVVVMNGQYKVNKDNSKIDPIYWKDDSKEIRRGSWFSPDYQPLEMPLSDQIEKNHLQCFRNQMIPEGTTVFSKSETSNKPVLAELHVDGYDIRWSSVIDISLHQKGNAILRYLWAKSTPLRRGYEKEADWNDAAAEISHLILVVHGIGQKGYENLIAQNANQVRDGVVSAMEKVYPEEKSRPMFLPVEWRSALKLDNGLTDNITIPKMSSMRASLNSTAMDVMYYQSPLFRTEIVRGVVSQLNRTYKLFKANNPQFNGHVSVFGHSLGSVICYDVLTQYSPLMLFDKYVTKSIDEYLKRDDTNASEEARKALEAMKLAREQLRDNLEGGIHKLLVTKEEQLEFKVKYLFAVGSPLGVFLTMRGGESTDLLSKATNVERVFNIFHPYDPVAYRLEPFFAPEYRHIRPIKLFSNTDLRARASYENLPLDVYKHYLKKLKNLNKAKKNKDDKTADARSGGDDENEDEDECDSDEDARSGCSSPRSMTPPPFETAAANAAAAAKETKAVKKGWFSFGTSSNPKKTQSTASLGSVNATSTENIEFAKEAAEELPLAEKILGSGVRVPHRIDFQLQPALTEKSYWSVLKSHFAYWTNADLALFLANVLYCKPLKPEEAKPTWA.

2 disordered regions span residues 1-142 (MSGS…RRRK) and 666-718 (KKNK…AANA). Over residues 26-39 (GKVKQKEKPKEKQM) the composition is skewed to basic and acidic residues. Positions 97 to 111 (SRPSGLPSNGNPGSS) are enriched in low complexity. Positions 564-827 (LEFKVKYLFA…ALFLANVLYC (264 aa)) constitute a DDHD domain. The span at 668-680 (NKDDKTADARSGG) shows a compositional bias: basic and acidic residues. Residues 681–694 (DDENEDEDECDSDE) show a composition bias toward acidic residues.

Belongs to the PA-PLA1 family.

The enzyme catalyses 1,2-dihexadecanoyl-sn-glycero-3-phospho-(1D-myo-inositol) + H2O = 2-hexadecanoyl-sn-glycero-3-phospho-(1D-myo-inositol) + hexadecanoate + H(+). It carries out the reaction a 1,2-diacyl-sn-glycero-3-phospho-L-serine + H2O = a 2-acyl-sn-glycero-3-phospho-L-serine + a fatty acid + H(+). The catalysed reaction is 1-hexadecanoyl-2-(9Z-octadecenoyl)-sn-glycero-3-phospho-L-serine + H2O = 2-(9Z-octadecenoyl)-sn-glycero-3-phospho-L-serine + hexadecanoate + H(+). It catalyses the reaction 1,2-di-(9Z-octadecenoyl)-sn-glycero-3-phosphocholine + H2O = (9Z-octadecenoyl)-sn-glycero-3-phosphocholine + (9Z)-octadecenoate + H(+). The enzyme catalyses a 1,2-diacyl-sn-glycero-3-phosphocholine + H2O = a 1-acyl-sn-glycero-3-phosphocholine + a fatty acid + H(+). It carries out the reaction 1,2-dihexadecanoyl-sn-glycero-3-phosphocholine + H2O = 1-hexadecanoyl-sn-glycero-3-phosphocholine + hexadecanoate + H(+). Inhibited by E-6-bromomethylene-3-1-naphthalenyl-2H-tetrahydropyran-2-one (BEL) in vitro. In terms of biological role, hydrolyzes the ester bond at the sn-1 position of glycerophospholipids and produces 2-acyl lysophospholipids, being phosphatidylinositol (PI) its major substrate. PI is a versatile lipid that not only serves as a structural component of cellular membranes, but also plays important roles in signal transduction through distinct phosphorylated derivatives of the inositol head group. Catalyzes the hydrolysis of phosphatidylcholine at sn-2 position in vitro. Regulates asymmetric division, an important property of stem cells in C.elegans, by controlling the subcellular localizations of beta-catenin. This Caenorhabditis elegans protein is Intracellular phospholipase A1.